Reading from the N-terminus, the 310-residue chain is Thioredoxin reductase (310 aa).

Position 34–41 (34–41) interacts with FAD; the sequence is NGMQPGGQ. A disulfide bridge links Cys135 with Cys138. Residue 281–290 participates in FAD binding; that stretch reads DVQDKIYRQA.

Belongs to the class-II pyridine nucleotide-disulfide oxidoreductase family. Homodimer. The cofactor is FAD.

It localises to the cytoplasm. It catalyses the reaction [thioredoxin]-dithiol + NADP(+) = [thioredoxin]-disulfide + NADPH + H(+). This is Thioredoxin reductase (trxB) from Rickettsia prowazekii (strain Madrid E).